Consider the following 295-residue polypeptide: Tyrosine recombinase XerC (295 aa).

Residues methionine 1–threonine 84 enclose the Core-binding (CB) domain. Residues lysine 105–arginine 289 enclose the Tyr recombinase domain. Active-site residues include arginine 145, lysine 169, histidine 241, arginine 244, and histidine 267. Tyrosine 276 acts as the O-(3'-phospho-DNA)-tyrosine intermediate in catalysis.

It belongs to the 'phage' integrase family. XerC subfamily. In terms of assembly, forms a cyclic heterotetrameric complex composed of two molecules of XerC and two molecules of XerD.

The protein localises to the cytoplasm. Site-specific tyrosine recombinase, which acts by catalyzing the cutting and rejoining of the recombining DNA molecules. The XerC-XerD complex is essential to convert dimers of the bacterial chromosome into monomers to permit their segregation at cell division. It also contributes to the segregational stability of plasmids. The sequence is that of Tyrosine recombinase XerC from Lactobacillus delbrueckii subsp. bulgaricus (strain ATCC 11842 / DSM 20081 / BCRC 10696 / JCM 1002 / NBRC 13953 / NCIMB 11778 / NCTC 12712 / WDCM 00102 / Lb 14).